The chain runs to 207 residues: Riboflavin synthase (207 aa).

2 Lumazine-binding repeats span residues 1–94 (MFTG…LGGH) and 95–191 (IVQG…INYL). 2,4-dihydroxypteridine contacts are provided by residues 4–6 (GLV), 45–47 (CLT), 59–64 (DVSPET), 98–100 (GHV), lysine 133, 142–144 (SLT), and 156–161 (NIIPHT).

Homotrimer.

The catalysed reaction is 2 6,7-dimethyl-8-(1-D-ribityl)lumazine + H(+) = 5-amino-6-(D-ribitylamino)uracil + riboflavin. The protein operates within cofactor biosynthesis; riboflavin biosynthesis; riboflavin from 2-hydroxy-3-oxobutyl phosphate and 5-amino-6-(D-ribitylamino)uracil: step 2/2. Its function is as follows. Catalyzes the dismutation of two molecules of 6,7-dimethyl-8-ribityllumazine, resulting in the formation of riboflavin and 5-amino-6-(D-ribitylamino)uracil. The protein is Riboflavin synthase (ribE) of Aquifex aeolicus (strain VF5).